The following is a 284-amino-acid chain: 2-dehydro-3-deoxyphosphooctonate aldolase (284 aa).

The protein belongs to the KdsA family.

The protein resides in the cytoplasm. The catalysed reaction is D-arabinose 5-phosphate + phosphoenolpyruvate + H2O = 3-deoxy-alpha-D-manno-2-octulosonate-8-phosphate + phosphate. The protein operates within carbohydrate biosynthesis; 3-deoxy-D-manno-octulosonate biosynthesis; 3-deoxy-D-manno-octulosonate from D-ribulose 5-phosphate: step 2/3. Its pathway is bacterial outer membrane biogenesis; lipopolysaccharide biosynthesis. This chain is 2-dehydro-3-deoxyphosphooctonate aldolase, found in Burkholderia cenocepacia (strain ATCC BAA-245 / DSM 16553 / LMG 16656 / NCTC 13227 / J2315 / CF5610) (Burkholderia cepacia (strain J2315)).